Here is a 97-residue protein sequence, read N- to C-terminus: UPF0729 protein AAEL015238 (97 aa).

The interval 69 to 97 (EVAASGSGSNGTATAVGSEGEAEETKKSQ) is disordered. Over residues 74–83 (GSGSNGTATA) the composition is skewed to polar residues.

This sequence belongs to the UPF0729 family.

The protein is UPF0729 protein AAEL015238 of Aedes aegypti (Yellowfever mosquito).